Reading from the N-terminus, the 393-residue chain is Lipid-A-disaccharide synthase (393 aa).

This sequence belongs to the LpxB family.

The enzyme catalyses a lipid X + a UDP-2-N,3-O-bis[(3R)-3-hydroxyacyl]-alpha-D-glucosamine = a lipid A disaccharide + UDP + H(+). It functions in the pathway bacterial outer membrane biogenesis; LPS lipid A biosynthesis. Its function is as follows. Condensation of UDP-2,3-diacylglucosamine and 2,3-diacylglucosamine-1-phosphate to form lipid A disaccharide, a precursor of lipid A, a phosphorylated glycolipid that anchors the lipopolysaccharide to the outer membrane of the cell. This is Lipid-A-disaccharide synthase from Granulibacter bethesdensis (strain ATCC BAA-1260 / CGDNIH1).